Consider the following 735-residue polypeptide: Ethylene receptor 1 (735 aa).

3 helical membrane passes run 23-43 (ISDFFIAVAYFSIPLELIYFV), 54-74 (VLVQFGAFIVLCGATHLINLW), and 92-112 (VLTAVVSCATALMLVHIIPDL). Cu cation contacts are provided by Cys65 and His69. The GAF domain occupies 158 to 307 (DRHTILKTTL…VVADQVAVAL (150 aa)). The region spanning 350 to 586 (VMNHEMRTPM…IFDVKLAISN (237 aa)) is the Histidine kinase domain. His353 is modified (phosphohistidine; by autocatalysis). Residues 609-726 (KVLVMDENGV…NMRNVLSDRL (118 aa)) enclose the Response regulatory domain. Asp657 carries the post-translational modification 4-aspartylphosphate. Lys711 participates in a covalent cross-link: Glycyl lysine isopeptide (Lys-Gly) (interchain with G-Cter in ubiquitin).

Belongs to the ethylene receptor family. Homodimer; disulfide-linked. It depends on Cu cation as a cofactor. Activation probably requires a transfer of a phosphate group between a His in the transmitter domain and an Asp of the receiver domain.

Its subcellular location is the endoplasmic reticulum membrane. It catalyses the reaction ATP + protein L-histidine = ADP + protein N-phospho-L-histidine.. In terms of biological role, may act early in the ethylene signal transduction pathway, possibly as an ethylene receptor, or as a regulator of the pathway. The protein is Ethylene receptor 1 (ETR1) of Brassica oleracea (Wild cabbage).